Reading from the N-terminus, the 558-residue chain is Ribonuclease J (558 aa).

Zn(2+) contacts are provided by His-81, His-83, Asp-85, His-86, His-148, and Asp-170. Substrate is bound at residue 371 to 375; the sequence is HVSGH. Residue His-397 coordinates Zn(2+).

The protein belongs to the metallo-beta-lactamase superfamily. RNA-metabolizing metallo-beta-lactamase-like family. Bacterial RNase J subfamily. Homodimer, may be a subunit of the RNA degradosome. Zn(2+) is required as a cofactor.

It is found in the cytoplasm. Functionally, an RNase that has 5'-3' exonuclease and possibly endoonuclease activity. Involved in maturation of rRNA and in some organisms also mRNA maturation and/or decay. The polypeptide is Ribonuclease J (Mycobacterium tuberculosis (strain CDC 1551 / Oshkosh)).